Consider the following 690-residue polypeptide: Elongation factor G (690 aa).

The region spanning 8-283 (SRCRNIGIMA…AVVDFLPSPS (276 aa)) is the tr-type G domain. GTP is bound by residues 17–24 (AHIDAGKT), 81–85 (DTPGH), and 135–138 (NKMD).

The protein belongs to the TRAFAC class translation factor GTPase superfamily. Classic translation factor GTPase family. EF-G/EF-2 subfamily.

The protein localises to the cytoplasm. Its function is as follows. Catalyzes the GTP-dependent ribosomal translocation step during translation elongation. During this step, the ribosome changes from the pre-translocational (PRE) to the post-translocational (POST) state as the newly formed A-site-bound peptidyl-tRNA and P-site-bound deacylated tRNA move to the P and E sites, respectively. Catalyzes the coordinated movement of the two tRNA molecules, the mRNA and conformational changes in the ribosome. In Anaplasma marginale (strain Florida), this protein is Elongation factor G.